The primary structure comprises 401 residues: Argininosuccinate synthase (401 aa).

8–16 provides a ligand contact to ATP; that stretch reads AYSGGLDTS. Tyrosine 87 contributes to the L-citrulline binding site. Glycine 117 contributes to the ATP binding site. Threonine 119, asparagine 123, and aspartate 124 together coordinate L-aspartate. Asparagine 123 serves as a coordination point for L-citrulline. Arginine 127, serine 175, glutamate 259, and tyrosine 271 together coordinate L-citrulline.

It belongs to the argininosuccinate synthase family. Type 1 subfamily. In terms of assembly, homotetramer.

The protein resides in the cytoplasm. It catalyses the reaction L-citrulline + L-aspartate + ATP = 2-(N(omega)-L-arginino)succinate + AMP + diphosphate + H(+). The protein operates within amino-acid biosynthesis; L-arginine biosynthesis; L-arginine from L-ornithine and carbamoyl phosphate: step 2/3. This chain is Argininosuccinate synthase, found in Arthrobacter sp. (strain FB24).